The primary structure comprises 485 residues: Glutamyl-tRNA(Gln) amidotransferase subunit A (485 aa).

Active-site charge relay system residues include Lys79 and Ser154. Ser178 serves as the catalytic Acyl-ester intermediate.

It belongs to the amidase family. GatA subfamily. In terms of assembly, heterotrimer of A, B and C subunits.

It carries out the reaction L-glutamyl-tRNA(Gln) + L-glutamine + ATP + H2O = L-glutaminyl-tRNA(Gln) + L-glutamate + ADP + phosphate + H(+). Allows the formation of correctly charged Gln-tRNA(Gln) through the transamidation of misacylated Glu-tRNA(Gln) in organisms which lack glutaminyl-tRNA synthetase. The reaction takes place in the presence of glutamine and ATP through an activated gamma-phospho-Glu-tRNA(Gln). This Staphylococcus aureus (strain Mu3 / ATCC 700698) protein is Glutamyl-tRNA(Gln) amidotransferase subunit A.